We begin with the raw amino-acid sequence, 245 residues long: 1-(5-phosphoribosyl)-5-[(5-phosphoribosylamino)methylideneamino] imidazole-4-carboxamide isomerase (245 aa).

The Proton acceptor role is filled by Asp-7. Asp-129 acts as the Proton donor in catalysis.

This sequence belongs to the HisA/HisF family.

The protein resides in the cytoplasm. The enzyme catalyses 1-(5-phospho-beta-D-ribosyl)-5-[(5-phospho-beta-D-ribosylamino)methylideneamino]imidazole-4-carboxamide = 5-[(5-phospho-1-deoxy-D-ribulos-1-ylimino)methylamino]-1-(5-phospho-beta-D-ribosyl)imidazole-4-carboxamide. It functions in the pathway amino-acid biosynthesis; L-histidine biosynthesis; L-histidine from 5-phospho-alpha-D-ribose 1-diphosphate: step 4/9. The polypeptide is 1-(5-phosphoribosyl)-5-[(5-phosphoribosylamino)methylideneamino] imidazole-4-carboxamide isomerase (Escherichia coli O127:H6 (strain E2348/69 / EPEC)).